The following is a 513-amino-acid chain: GMP synthase [glutamine-hydrolyzing] (513 aa).

Residues 9–198 enclose the Glutamine amidotransferase type-1 domain; sequence LILVLDFGSQ…VRRVCDCRGQ (190 aa). The active-site Nucleophile is Cys-86. Residues His-172 and Glu-174 contribute to the active site. In terms of domain architecture, GMPS ATP-PPase spans 199–388; it reads WTMENFIEIE…LGIPEHLVWR (190 aa). 226-232 contributes to the ATP binding site; the sequence is SGGVDSS.

As to quaternary structure, homodimer.

The enzyme catalyses XMP + L-glutamine + ATP + H2O = GMP + L-glutamate + AMP + diphosphate + 2 H(+). The protein operates within purine metabolism; GMP biosynthesis; GMP from XMP (L-Gln route): step 1/1. In terms of biological role, catalyzes the synthesis of GMP from XMP. This Staphylococcus aureus (strain USA300) protein is GMP synthase [glutamine-hydrolyzing].